Here is a 28-residue protein sequence, read N- to C-terminus: Conotoxin as14b (28 aa).

Intrachain disulfides connect Cys-7–Cys-27 and Cys-11–Cys-23.

It belongs to the conotoxin L superfamily. In terms of tissue distribution, expressed by the venom duct.

The protein localises to the secreted. In vivo, intracranial injection elicits scratching and grooming activity in mice, and causes body and rear limb extension and tail curling immediately upon injection. The polypeptide is Conotoxin as14b (Conus cancellatus (Cancellate cone)).